We begin with the raw amino-acid sequence, 489 residues long: Protein nucleotidyltransferase YdiU (489 aa).

Residues glycine 88, glycine 90, arginine 91, lysine 111, aspartate 123, glycine 124, arginine 174, and arginine 181 each contribute to the ATP site. The Proton acceptor role is filled by aspartate 250. Residues asparagine 251 and aspartate 260 each contribute to the Mg(2+) site. Aspartate 260 provides a ligand contact to ATP.

Belongs to the SELO family. Mg(2+) serves as cofactor. Requires Mn(2+) as cofactor.

It carries out the reaction L-seryl-[protein] + ATP = 3-O-(5'-adenylyl)-L-seryl-[protein] + diphosphate. The catalysed reaction is L-threonyl-[protein] + ATP = 3-O-(5'-adenylyl)-L-threonyl-[protein] + diphosphate. It catalyses the reaction L-tyrosyl-[protein] + ATP = O-(5'-adenylyl)-L-tyrosyl-[protein] + diphosphate. The enzyme catalyses L-histidyl-[protein] + UTP = N(tele)-(5'-uridylyl)-L-histidyl-[protein] + diphosphate. It carries out the reaction L-seryl-[protein] + UTP = O-(5'-uridylyl)-L-seryl-[protein] + diphosphate. The catalysed reaction is L-tyrosyl-[protein] + UTP = O-(5'-uridylyl)-L-tyrosyl-[protein] + diphosphate. Nucleotidyltransferase involved in the post-translational modification of proteins. It can catalyze the addition of adenosine monophosphate (AMP) or uridine monophosphate (UMP) to a protein, resulting in modifications known as AMPylation and UMPylation. This Vibrio cholerae serotype O1 (strain ATCC 39315 / El Tor Inaba N16961) protein is Protein nucleotidyltransferase YdiU.